The chain runs to 193 residues: Spermatogenesis-associated protein 3 (193 aa).

Basic residues predominate over residues 1-16 (MKKVKKKKSDSRRRRN). The interval 1-92 (MKKVKKKKSD…SPFLVPMEPK (92 aa)) is disordered. Low complexity predominate over residues 17-35 (SISPQTSSDSSQQPSSETP). A compositionally biased stretch (pro residues) spans 36 to 48 (PSCPEPASPPSKP).

Strongly expressed in testis. Faintly expressed in epididymis, ovary, spleen, kidney, lung, heart, brain, epididymis, liver and skeletal muscle.

The protein resides in the cell projection. It localises to the cilium. It is found in the flagellum. The chain is Spermatogenesis-associated protein 3 (Spata3) from Mus musculus (Mouse).